The sequence spans 670 residues: Receptor for retinol uptake STRA6 (670 aa).

The Extracellular segment spans residues 1–50 (MESQASENGSQTSSGVTDDYSSWYIEEPLGAEEVQPEGVIPLCQLTAPPA). Asn8 carries N-linked (GlcNAc...) asparagine glycosylation. Residues 51-71 (LLHACLASLSFLVLLLLALLV) traverse the membrane as a helical segment. Residues 72-97 (RRRRLWPRCGHRGLGLPSPVDFLAGD) are Cytoplasmic-facing. Residues 98-118 (LSWTVPAAVFVVLFSNLCLLL) form a helical membrane-spanning segment. Residues 119–144 (PDENPLPFLNLTAASSPDGEMETSRG) are Extracellular-facing. N-linked (GlcNAc...) asparagine glycosylation is present at Asn128. Residues 145-165 (PWKLLALLYYPALYYPLAACA) form a helical membrane-spanning segment. Over 166–168 (SAG) the chain is Cytoplasmic. The helical transmembrane segment at 169–189 (HQAAFLLGTVLSWAHFGVQVW) threads the bilayer. Over 190–205 (QKAECPQDPKIYKHYS) the chain is Extracellular. A helical membrane pass occupies residues 206–226 (LLASLPLLLGLGFLSLWYPVQ). Residues 227–296 (LVQSLRHRTG…PQPGFRLPLK (70 aa)) are Cytoplasmic-facing. The interaction with RBP1 stretch occupies residues 235 to 294 (TGAGSQGLQTSYSEKYLRTLLCPKKLDSCSHPASKRSLLSRAWAFSHHSIYTPQPGFRLP). The helical transmembrane segment at 297–317 (LVISATLTGTATYQVALLLLV) threads the bilayer. At 318–368 (SVVPTVQKVRAGINTDVSYLLAGFGIVLSEDRQEVVELVKHHLWTVEACYI) the chain is on the extracellular side. A helical transmembrane segment spans residues 369–389 (SALVLSCASTFLLLIRSLRTH). Residues 390-423 (RANLQALHRGAALDLDPPLQSIHPSRQAIVSWMS) lie on the Cytoplasmic side of the membrane. A helical membrane pass occupies residues 424 to 444 (FCAYQTAFSCLGLLVQQVIFF). Residues 445–474 (LGTTSLAFLVFVPLLHGRNLLLLRSLESTW) lie on the Extracellular side of the membrane. A helical transmembrane segment spans residues 475–495 (PFWLTVALAVILQNIAANWIF). The Cytoplasmic portion of the chain corresponds to 496–510 (LRTHHGYPELTNRRM). The helical intramembrane region spans 511-548 (LCVATFLLFPINMLVGAIMAVWRVLISSLYNTVHLGQM). The Cytoplasmic portion of the chain corresponds to 549–670 (DLSLLPQRAA…TSAKANGTQP (122 aa)). Phosphotyrosine is present on Tyr644.

As to quaternary structure, homodimer. Interacts with JAK2 and STAT5. Interacts (via extracellular domains) with RBP4. Interacts (via cytoplasmic domains) with RBP1. Post-translationally, phosphorylated on tyrosine residues in response to RBP4 binding. Phosphorylation requires the presence of LRAT, suggesting it may be triggered by the uptake of retinol that is then metabolized within the cell to retinoids that function as signaling molecules. Widely expressed in the embryo. Detected in adult in the retinal pigment epithelium in the eye. In the adult, is highly expressed in cells that compose blood-organ barriers in the brain (choroid plexus and the brain microvascular), in testis (the basal layer of the seminiferous epithelium), in the yolk sac, and in the chorioallantoic placenta. Detected in white adipose tissue and skeletal muscle, but not in liver (at protein level). Widely expressed in adult, with high expression levels in the eye. Detected in brain, cerebellum, testis, pituitary, pancreas, kidney, spleen, and female genital tract; and at very low levels in heart and lung. Not detected in liver.

It localises to the cell membrane. Functions as a retinol transporter. Accepts all-trans retinol from the extracellular retinol-binding protein RBP4, facilitates retinol transport across the cell membrane, and then transfers retinol to the cytoplasmic retinol-binding protein RBP1. Retinol uptake is enhanced by LRAT, an enzyme that converts retinol to all-trans retinyl esters, the storage forms of vitamin A. Contributes to the activation of a signaling cascade that depends on retinol transport and LRAT-dependent generation of retinol metabolites that then trigger activation of JAK2 and its target STAT5, and ultimately increase the expression of SOCS3 and inhibit cellular responses to insulin. Important for the homeostasis of vitamin A and its derivatives, such as retinoic acid and 11-cis-retinal. STRA6-mediated transport is particularly important in the eye, and under conditions of dietary vitamin A deficiency. Does not transport retinoic acid. The sequence is that of Receptor for retinol uptake STRA6 (Stra6) from Mus musculus (Mouse).